The sequence spans 352 residues: Nuclear receptor subfamily 1 group I member 3 (352 aa).

Residues leucine 8–serine 83 constitute a DNA-binding region (nuclear receptor). The segment at cysteine 11–cysteine 31 adopts an NR C4-type zinc-finger fold. Threonine 38 bears the Phosphothreonine; by PKC mark. An NR C4-type zinc finger spans residues cysteine 47–cysteine 71. The NR LBD domain occupies glutamate 109 to serine 352.

This sequence belongs to the nuclear hormone receptor family. NR1 subfamily. As to quaternary structure, heterodimer of NR1I3 and RXR. Interacts with PSMC4. Interacts with ECT2. Directly interacts with DNAJC7; this complex may also include HSP90. Interacts with CRY1. Interacts with CRY2 in a ligand-dependent manner. In terms of processing, phosphorylated at Thr-38 by PKC, dephosphorylation of Thr-38 is required for nuclear translocation and activation.

It localises to the nucleus. The protein localises to the cytoplasm. The protein resides in the cytoskeleton. Its function is as follows. Binds and transactivates the retinoic acid response elements that control expression of the retinoic acid receptor beta 2 and alcohol dehydrogenase 3 genes. Transactivates both the phenobarbital responsive element module of the human CYP2B6 gene and the CYP3A4 xenobiotic response element. This chain is Nuclear receptor subfamily 1 group I member 3 (NR1I3), found in Macaca mulatta (Rhesus macaque).